Consider the following 419-residue polypeptide: Transcription termination factor Rho (419 aa).

One can recognise a Rho RNA-BD domain in the interval 48–123 (EISGDGVLEI…LKVDTINFDR (76 aa)). 3 RNA-binding regions span residues 61–66 (GFGFLR), 78–80 (DIY), and 108–110 (ERY). ATP is bound by residues 169–174 (GKGQRG), 181–186 (KAGKTI), and Arg212. The RNA-binding 2 stretch occupies residues 284 to 288 (VLTGG).

This sequence belongs to the Rho family. In terms of assembly, homohexamer. The homohexamer assembles into an open ring structure.

In terms of biological role, facilitates transcription termination by a mechanism that involves Rho binding to the nascent RNA, activation of Rho's RNA-dependent ATPase activity, and release of the mRNA from the DNA template. The sequence is that of Transcription termination factor Rho from Pseudomonas fluorescens biotype C.